The chain runs to 271 residues: MASADSRRVADGGGAGGTFQPYLDTLRQELQQTDPTLLSVVVAVLAVLLTLVFWKLIRSRRSSQRAVLLVGLCDSGKTLLFVRLLTGLYRDTQTSITDSCAVYRVNNNRGNSLTLIDLPGHESLRLQFLERFKSSARAIVFVVDSAAFQREVKDVAEFLYQVLIDSMGLKNTPSFLIACNKQDIAMAKSAKLIQQQLEKELNTLRVTRSAAPSTLDSSSTAPAQLGKKGKEFEFSQLPLKVEFLECSAKGGRGDVGSADIQDLEKWLAKIA.

A helical membrane pass occupies residues 37 to 57 (LLSVVVAVLAVLLTLVFWKLI). GTP contacts are provided by residues 71-79 (GLCDSGKTL) and 92-95 (TQTS). Serine 112 is subject to Phosphoserine. Glycine 120 lines the GTP pocket. The residue at position 214 (threonine 214) is a Phosphothreonine. Alanine 248 serves as a coordination point for GTP.

The protein belongs to the SRP receptor beta subunit family. Heterodimer with SRPRA.

The protein localises to the endoplasmic reticulum membrane. Component of the signal recognition particle (SRP) complex receptor (SR). Ensures, in conjunction with the SRP complex, the correct targeting of the nascent secretory proteins to the endoplasmic reticulum membrane system. May mediate the membrane association of SR. The sequence is that of Signal recognition particle receptor subunit beta (SRPRB) from Homo sapiens (Human).